A 1358-amino-acid chain; its full sequence is Tenascin-R (1358 aa).

The signal sequence occupies residues 1 to 31; that stretch reads MGADGETVVLKNMLIGINLILLGSMIKPSEC. Threonine 36 and threonine 37 each carry an O-linked (GalNAc...) threonine glycan. Residue asparagine 55 is glycosylated (N-linked (GlcNAc...) asparagine). A coiled-coil region spans residues 127–157; it reads CASSAQVLQELLSRIEMLEREVSVLRDQCNA. Serine 176 carries an O-linked (Xyl...) (chondroitin sulfate) serine glycan. N-linked (GlcNAc...) asparagine glycans are attached at residues asparagine 180 and asparagine 198. EGF-like domains lie at 188–199, 219–230, and 250–261; these read CICNEGWFGKNC, CICDSEYSGDDC, and CVCEEPYTGEDC. O-linked (Xyl...) (chondroitin sulfate) serine glycosylation is present at serine 271. N-linked (GlcNAc...) asparagine glycosylation is present at asparagine 278. The EGF-like 4 domain maps to 281–292; that stretch reads CLCEEGYVGEDC. 3 disulfides stabilise this stretch: cysteine 292/cysteine 301, cysteine 297/cysteine 312, and cysteine 314/cysteine 323. Serine 302 carries an O-linked (Xyl...) (chondroitin sulfate) serine glycan. The EGF-like 5 domain occupies 312 to 323; the sequence is CVCEEGYQGPDC. Fibronectin type-III domains follow at residues 328-420, 421-505, 506-595, 596-687, 688-777, 778-865, 866-955, 956-1042, and 1043-1130; these read PPED…TPQG, LQFK…TVID, GPTQ…TEID, APKN…TELD, SPRD…FRPI, SHLH…TGID, PPKD…AMDN, PVDL…TLLD, and PPAN…TGGR. N-linked (GlcNAc...) asparagine glycans are attached at residues asparagine 392, asparagine 470, and asparagine 581. A Phosphoserine modification is found at serine 724. N-linked (GlcNAc...) asparagine glycosylation is found at asparagine 791, asparagine 874, asparagine 1036, asparagine 1046, and asparagine 1261. The Fibrinogen C-terminal domain maps to 1129-1344; it reads GRVFPHPQDC…FVEMKMRPYN (216 aa).

Belongs to the tenascin family. In terms of assembly, forms oligomers. Interacts with CNTN1, TNC, and FN1. Interacts with BCAN and ACAN in a calcium-dependent manner. Interacts with SCN2B, PTPRZ1, and CSPG3. Contains N-linked oligosaccharides, O-linked sialylated structures and O-linked chondroitin sulfate glycosaminoglycans. Contains N-linked oligosaccharides with a sulfated carbohydrate structure. O-glycosylated on Thr-36 or Thr-37 with a core 1 or possibly core 8 glycan. As to expression, brain specific.

The protein resides in the secreted. The protein localises to the extracellular space. Its subcellular location is the extracellular matrix. Its function is as follows. Neural extracellular matrix (ECM) protein involved in interactions with different cells and matrix components. These interactions can influence cellular behavior by either evoking a stable adhesion and differentiation, or repulsion and inhibition of neurite growth. Binding to cell surface gangliosides inhibits RGD-dependent integrin-mediated cell adhesion and results in an inhibition of PTK2/FAK1 (FAK) phosphorylation and cell detachment. Binding to membrane surface sulfatides results in a oligodendrocyte adhesion and differentiation. Interaction with CNTN1 induces a repulsion of neurons and an inhibition of neurite outgrowth. Interacts with SCN2B may play a crucial role in clustering and regulation of activity of sodium channels at nodes of Ranvier. TNR-linked chondroitin sulfate glycosaminoglycans are involved in the interaction with FN1 and mediate inhibition of cell adhesion and neurite outgrowth. The highly regulated addition of sulfated carbohydrate structure may modulate the adhesive properties of TNR over the course of development and during synapse maintenance. In Homo sapiens (Human), this protein is Tenascin-R (TNR).